Reading from the N-terminus, the 144-residue chain is Protein cornichon (144 aa).

The Lumenal segment spans residues Met1 to Tyr10. Positions Met1–Leu57 are interaction with grk. The chain crosses the membrane as a helical span at residues Ile11–Phe31. Over Asp32–Tyr56 the chain is Cytoplasmic. The chain crosses the membrane as a helical span at residues Leu57–Leu77. Residues Asn78 to Lys122 lie on the Lumenal side of the membrane. The helical transmembrane segment at Leu123–Ser143 threads the bilayer. Residue Thr144 is a topological domain, cytoplasmic.

It belongs to the cornichon family. In terms of assembly, interacts with grk.

The protein resides in the endoplasmic reticulum membrane. Acts as a cargo receptor necessary for the transportation of gurken (grk) to a transitional endoplasmic reticulum (tER) site and promotes its incorporation into coat protein complex II (COPII) vesicles. Associated with gurken, produces a signal received by torpedo resulting in a signaling pathway that first establishes posterior follicle cell fates and normal localization of the anterior and posterior determinants, later they act in a signaling event inducing dorsal follicle cell fates and regulating the dorsal-ventral pattern of egg and embryo. This Drosophila virilis (Fruit fly) protein is Protein cornichon (cni).